Consider the following 362-residue polypeptide: 3-dehydroquinate synthase (362 aa).

NAD(+) contacts are provided by residues 71–76 (DGEQYK), 105–109 (GVVGD), 129–130 (TT), K142, K151, and 169–172 (CLKT). Positions 184, 247, and 264 each coordinate Zn(2+).

This sequence belongs to the sugar phosphate cyclases superfamily. Dehydroquinate synthase family. Requires Co(2+) as cofactor. It depends on Zn(2+) as a cofactor. NAD(+) serves as cofactor.

It is found in the cytoplasm. It carries out the reaction 7-phospho-2-dehydro-3-deoxy-D-arabino-heptonate = 3-dehydroquinate + phosphate. The protein operates within metabolic intermediate biosynthesis; chorismate biosynthesis; chorismate from D-erythrose 4-phosphate and phosphoenolpyruvate: step 2/7. Catalyzes the conversion of 3-deoxy-D-arabino-heptulosonate 7-phosphate (DAHP) to dehydroquinate (DHQ). This is 3-dehydroquinate synthase from Escherichia coli (strain K12 / MC4100 / BW2952).